The primary structure comprises 138 residues: MNIIDNFEQENISKLTANKKIPDFEAGDTVKVTVKIIDKAIEKDGKEKLTERFQAYEGVVIAKRNRGITSSFLVRKISHGEGVERRFMTYSPIVHSIDVVKYGVVRRAKLYYLRHRNGKAARIRERHITSAKPKAVKS.

This sequence belongs to the bacterial ribosomal protein bL19 family.

Its function is as follows. This protein is located at the 30S-50S ribosomal subunit interface and may play a role in the structure and function of the aminoacyl-tRNA binding site. This is Large ribosomal subunit protein bL19 from Rickettsia typhi (strain ATCC VR-144 / Wilmington).